An 840-amino-acid polypeptide reads, in one-letter code: DNA helicase MCM8 (840 aa).

Residues 16–54 (QSWKRGRGGGNFSGKWREREHRPDLSKTTGKRTSEQTPQ) form a disordered region. The segment covering 30–40 (KWREREHRPDL) has biased composition (basic and acidic residues). One can recognise an MCM domain in the interval 402–609 (LFKLIVNSLC…HHDHLLSEHV (208 aa)). An ATP-binding site is contributed by 454 to 461 (GDPGLGKS). Position 630 is a phosphoserine (S630).

It belongs to the MCM family. As to quaternary structure, component of the MCM8-MCM9 complex, which forms a hexamer composed of MCM8 and MCM9. Interacts with the DNA mismatch repair (MMR) complex composed at least of MSH2, MSH3, MSH6, PMS1 and MLH1. Interacts with RAD51; the interaction recruits RAD51 to DNA damage sites. Interacts with the MRN complex composed of MRE11, RAD50 and NBN/NBS1. Interacts with CDC6 and ORC2. Interacts with HROB; the interaction recruits the MCM8-MCM9 complex to DNA damage sites. As to expression, highest levels in placenta, lung and pancreas. Low levels in skeletal muscle and kidney. Expressed in various tumors with highest levels in colon and lung cancers.

Its subcellular location is the nucleus. It is found in the chromosome. It catalyses the reaction ATP + H2O = ADP + phosphate + H(+). Its function is as follows. Component of the MCM8-MCM9 complex, a complex involved in the repair of double-stranded DNA breaks (DBSs) and DNA interstrand cross-links (ICLs) by homologous recombination (HR). Required for DNA resection by the MRE11-RAD50-NBN/NBS1 (MRN) complex by recruiting the MRN complex to the repair site and by promoting the complex nuclease activity. Probably by regulating the localization of the MNR complex, indirectly regulates the recruitment of downstream effector RAD51 to DNA damage sites including DBSs and ICLs. The MCM8-MCM9 complex is dispensable for DNA replication and S phase progression. However, may play a non-essential for DNA replication: may be involved in the activation of the prereplicative complex (pre-RC) during G(1) phase by recruiting CDC6 to the origin recognition complex (ORC). Probably by regulating HR, plays a key role during gametogenesis. Stabilizes MCM9 protein. This chain is DNA helicase MCM8 (MCM8), found in Homo sapiens (Human).